The chain runs to 619 residues: Chaperone protein HscA homolog (619 aa).

It belongs to the heat shock protein 70 family.

Functionally, chaperone involved in the maturation of iron-sulfur cluster-containing proteins. Has a low intrinsic ATPase activity which is markedly stimulated by HscB. In Chromobacterium violaceum (strain ATCC 12472 / DSM 30191 / JCM 1249 / CCUG 213 / NBRC 12614 / NCIMB 9131 / NCTC 9757 / MK), this protein is Chaperone protein HscA homolog.